A 294-amino-acid chain; its full sequence is Nucleotide-binding protein DICTH_1001 (294 aa).

Residue 10–17 coordinates ATP; it reads GLSGAGKS. 61-64 is a GTP binding site; it reads DIRT.

This sequence belongs to the RapZ-like family.

In terms of biological role, displays ATPase and GTPase activities. The polypeptide is Nucleotide-binding protein DICTH_1001 (Dictyoglomus thermophilum (strain ATCC 35947 / DSM 3960 / H-6-12)).